Reading from the N-terminus, the 140-residue chain is MSWDSYIDNLIAQTKDASGTGHSDKACIIGIDGGAPWTTAGHANALKLEGQEGPNIARCFKSKDFTPFMSSGIVADGTKYQFLREEDGKLVLAKKKGQGALTLQSSKTAIVIGHAPEGGQQGNTNKGVAVIAEYLESLGM.

S2 carries the N-acetylserine modification.

The protein belongs to the profilin family. In terms of assembly, occurs in many kinds of cells as a complex with monomeric actin in a 1:1 ratio.

It localises to the cytoplasm. It is found in the cytoskeleton. Functionally, binds to actin and affects the structure of the cytoskeleton. At high concentrations, profilin prevents the polymerization of actin, whereas it enhances it at low concentrations. By binding to PIP2, it inhibits the formation of IP3 and DG. This chain is Profilin, found in Heliocidaris crassispina (Sea urchin).